A 448-amino-acid polypeptide reads, in one-letter code: uncharacterized protein (448 aa).

Polar residues predominate over residues 428–440 (PFKTDCDPNNDND). Residues 428 to 448 (PFKTDCDPNNDNDLTPPAVFG) form a disordered region.

This is an uncharacterized protein from Mycoplasma pneumoniae (strain ATCC 29342 / M129 / Subtype 1) (Mycoplasmoides pneumoniae).